A 447-amino-acid chain; its full sequence is Oxysterols receptor LXR-alpha (447 aa).

A disordered region spans residues Met-1 to Pro-88. Residues Met-1 to Glu-96 are transactivation AF-1; required for ligand-independent transactivation function. Residues Asn-95–Ser-170 constitute a DNA-binding region (nuclear receptor). 2 NR C4-type zinc fingers span residues Cys-98–Cys-118 and Cys-134–Cys-158. The disordered stretch occupies residues Lys-178–Leu-203. A compositionally biased stretch (low complexity) spans Ala-187–Leu-203. The transactivation AF-2; required for ligand-dependent transactivation function; mediates interaction with CCAR2 stretch occupies residues Gln-205–Glu-447. In terms of domain architecture, NR LBD spans Glu-209 to Glu-447.

The protein belongs to the nuclear hormone receptor family. NR1 subfamily. Heterodimer of NR1H3 and RXR (retinoic acid receptor). Interacts with CCAR2 (via N-terminus) in a ligand-independent manner. Interacts with SIRT1 and this interaction is inhibited by CCAR2. Post-translationally, ubiquitinated by UBR5, leading to its degradation: UBR5 specifically recognizes and binds ligand-bound NR1H3 when it is not associated with coactivators (NCOAs). In presence of NCOAs, the UBR5-degron is not accessible, preventing its ubiquitination and degradation.

It is found in the nucleus. The protein localises to the cytoplasm. Nuclear receptor that exhibits a ligand-dependent transcriptional activation activity. Interaction with retinoic acid receptor (RXR) shifts RXR from its role as a silent DNA-binding partner to an active ligand-binding subunit in mediating retinoid responses through target genes defined by LXRES. LXRES are DR4-type response elements characterized by direct repeats of two similar hexanuclotide half-sites spaced by four nucleotides. Plays an important role in the regulation of cholesterol homeostasis, regulating cholesterol uptake through MYLIP-dependent ubiquitination of LDLR, VLDLR and LRP8. Interplays functionally with RORA for the regulation of genes involved in liver metabolism. Induces LPCAT3-dependent phospholipid remodeling in endoplasmic reticulum (ER) membranes of hepatocytes, driving SREBF1 processing and lipogenesis. Via LPCAT3, triggers the incorporation of arachidonate into phosphatidylcholines of ER membranes, increasing membrane dynamics and enabling triacylglycerols transfer to nascent very low-density lipoprotein (VLDL) particles. Via LPCAT3 also counteracts lipid-induced ER stress response and inflammation, likely by modulating SRC kinase membrane compartmentalization and limiting the synthesis of lipid inflammatory mediators. This Bos taurus (Bovine) protein is Oxysterols receptor LXR-alpha (NR1H3).